The primary structure comprises 275 residues: Uronate dehydrogenase (275 aa).

Residues glycine 22–leucine 23, aspartate 42–alanine 44, aspartate 60–leucine 61, and phenylalanine 80–serine 84 each bind NAD(+). Substrate is bound by residues serine 84 and serine 120–histidine 122. The Proton acceptor role is filled by tyrosine 145. Lysine 149 lines the NAD(+) pocket. Substrate is bound at residue serine 174. Residue serine 175 coordinates NAD(+). Arginine 183 contributes to the substrate binding site.

The protein belongs to the NAD(P)-dependent epimerase/dehydratase family. As to quaternary structure, homohexamer.

It carries out the reaction beta-D-galacturonate + NAD(+) = D-galactaro-1,5-lactone + NADH + H(+). The catalysed reaction is beta-D-glucuronate + NAD(+) = D-glucaro-1,5-lactone + NADH + H(+). Its pathway is carbohydrate acid metabolism; D-galacturonate degradation via prokaryotic oxidative pathway. In terms of biological role, catalyzes the oxidation of beta-D-galacturonate and beta-D-glucuronate to galactarate and D-glucarate, respectively. Cannot use NADP(+) instead of NAD(+) as cosubstrate. In Pseudomonas syringae pv. tomato (strain ATCC BAA-871 / DC3000), this protein is Uronate dehydrogenase (udh).